A 79-amino-acid polypeptide reads, in one-letter code: Protein B6 (79 aa).

This chain is Protein B6 (B6), found in Human herpesvirus 6B (strain Z29) (HHV-6 variant B).